Reading from the N-terminus, the 263-residue chain is MLATIDPIALRLGPISIHWYAICIVSGLLLAVYLAQRLAPEKGINPEHILDFILLAFPIAIVGARLYYVIFQWSYYSQNPSEIFAIWNGGIAIYGGLIAGAAVLYWFAKRHAIAVLDFLDIAAPGVMIAQSIGRWGNFVNQEAYGKAVSQLNYLPEIIRQQMFINGSYRVPTFLYESLWNLVGFSIILGLRYFNKGLRQGDVTSFYLIWYGLGRFVIEGMRTDSLMFVGLRVSQWVSISIIILGAVLLYFRKQRQKADYKMKN.

Helical transmembrane passes span 15–35 (ISIH…VYLA), 52–72 (FILL…VIFQ), 83–103 (IFAI…GAAV), and 112–132 (AIAV…AQSI). A 1,2-diacyl-sn-glycero-3-phospho-(1'-sn-glycerol) is bound at residue arginine 134. 3 consecutive transmembrane segments (helical) span residues 170-190 (VPTF…ILGL), 200-220 (GDVT…IEGM), and 227-247 (FVGL…GAVL).

Belongs to the Lgt family.

The protein localises to the cell membrane. It catalyses the reaction L-cysteinyl-[prolipoprotein] + a 1,2-diacyl-sn-glycero-3-phospho-(1'-sn-glycerol) = an S-1,2-diacyl-sn-glyceryl-L-cysteinyl-[prolipoprotein] + sn-glycerol 1-phosphate + H(+). It functions in the pathway protein modification; lipoprotein biosynthesis (diacylglyceryl transfer). In terms of biological role, catalyzes the transfer of the diacylglyceryl group from phosphatidylglycerol to the sulfhydryl group of the N-terminal cysteine of a prolipoprotein, the first step in the formation of mature lipoproteins. This Streptococcus thermophilus (strain CNRZ 1066) protein is Phosphatidylglycerol--prolipoprotein diacylglyceryl transferase.